The primary structure comprises 246 residues: 1-(5-phosphoribosyl)-5-[(5-phosphoribosylamino)methylideneamino] imidazole-4-carboxamide isomerase (246 aa).

Catalysis depends on D8, which acts as the Proton acceptor. D131 acts as the Proton donor in catalysis.

This sequence belongs to the HisA/HisF family.

Its subcellular location is the cytoplasm. The catalysed reaction is 1-(5-phospho-beta-D-ribosyl)-5-[(5-phospho-beta-D-ribosylamino)methylideneamino]imidazole-4-carboxamide = 5-[(5-phospho-1-deoxy-D-ribulos-1-ylimino)methylamino]-1-(5-phospho-beta-D-ribosyl)imidazole-4-carboxamide. It functions in the pathway amino-acid biosynthesis; L-histidine biosynthesis; L-histidine from 5-phospho-alpha-D-ribose 1-diphosphate: step 4/9. This is 1-(5-phosphoribosyl)-5-[(5-phosphoribosylamino)methylideneamino] imidazole-4-carboxamide isomerase from Bordetella petrii (strain ATCC BAA-461 / DSM 12804 / CCUG 43448).